The following is a 100-amino-acid chain: Large ribosomal subunit protein uL23 (100 aa).

It belongs to the universal ribosomal protein uL23 family. Part of the 50S ribosomal subunit. Contacts protein L29, and trigger factor when it is bound to the ribosome.

Its function is as follows. One of the early assembly proteins it binds 23S rRNA. One of the proteins that surrounds the polypeptide exit tunnel on the outside of the ribosome. Forms the main docking site for trigger factor binding to the ribosome. The chain is Large ribosomal subunit protein uL23 from Prochlorococcus marinus (strain MIT 9215).